A 459-amino-acid polypeptide reads, in one-letter code: Cysteine--tRNA ligase (459 aa).

Cys-27 contributes to the Zn(2+) binding site. The 'HIGH' region signature appears at 29-39 (VTVYDDCHIGH). The Zn(2+) site is built by Cys-208, His-233, and Glu-237. A 'KMSKS' region motif is present at residues 265-269 (KMSKS). Lys-268 lines the ATP pocket.

It belongs to the class-I aminoacyl-tRNA synthetase family. Monomer. Requires Zn(2+) as cofactor.

It is found in the cytoplasm. The catalysed reaction is tRNA(Cys) + L-cysteine + ATP = L-cysteinyl-tRNA(Cys) + AMP + diphosphate. This is Cysteine--tRNA ligase from Francisella tularensis subsp. novicida (strain U112).